The sequence spans 538 residues: Probable inorganic phosphate transporter 1-4 (538 aa).

The Cytoplasmic segment spans residues 1–23 (MAGELKVLNALDSAKTQWYHFTA). A helical transmembrane segment spans residues 24–44 (IVIAGMGFFTDAYDLFSISLV). Topologically, residues 45 to 69 (TKLLGRIYYFNPASKSPGSLPPNVS) are extracellular. A helical membrane pass occupies residues 70–90 (AAVNGVAFCGTLAGQLFFGWL). Residues 91–98 (GDKMGRKK) lie on the Cytoplasmic side of the membrane. Residues 99–119 (VYGMTLMLMVICCLASGLSFG) form a helical membrane-spanning segment. Residues 120 to 123 (SSAK) lie on the Extracellular side of the membrane. The helical transmembrane segment at 124 to 144 (GVMATLCFFRFWLGFGIGGDY) threads the bilayer. Over 145–163 (PLSATIMSEYANKRTRGAF) the chain is Cytoplasmic. The chain crosses the membrane as a helical span at residues 164–184 (IAAVFAMQGFGNLTGGIVAII). At 185-210 (VSAAFKSRFDAPAYRDDRTGSTVPQA) the chain is on the extracellular side. Residues 211–231 (DYAWRIVLMFGAIPALLTYYW) traverse the membrane as a helical segment. Residues 232 to 294 (RMKMPETARY…RQFLRRHGRH (63 aa)) lie on the Cytoplasmic side of the membrane. Residues 295–315 (LLGTTVCWFVLDIAFYSSNLF) form a helical membrane-spanning segment. Residues 316–346 (QKDIYTAVQWLPKADTMSALEEMFKISRAQT) are Extracellular-facing. Residues 347-367 (LVALCGTIPGYWFTVFFIDII) form a helical membrane-spanning segment. Residues 368–369 (GR) are Cytoplasmic-facing. The helical transmembrane segment at 370–390 (FVIQLGGFFFMTAFMLGLAVP) threads the bilayer. Residues 391-396 (YHHWTT) are Extracellular-facing. The chain crosses the membrane as a helical span at residues 397–417 (PGNHIGFVVMYAFTFFFANFG). Residues 418–440 (PNSTTFIVPAEIFPARLRSTCHG) are Cytoplasmic-facing. Residues 441–461 (ISAAAGKAGAIVGSFGFLYAA) traverse the membrane as a helical segment. Topologically, residues 462–481 (QSTDASKTDAGYPPGIGVRN) are extracellular. The helical transmembrane segment at 482–502 (SLFFLAGCNVIGFFFTFLVPE) threads the bilayer. At 503–538 (SKGKSLEELSGENEDDDDVPEAPATADHRTAPAPPA) the chain is on the cytoplasmic side. A disordered region spans residues 507–538 (SLEELSGENEDDDDVPEAPATADHRTAPAPPA). Over residues 511–522 (LSGENEDDDDVP) the composition is skewed to acidic residues.

It belongs to the major facilitator superfamily. Phosphate:H(+) symporter (TC 2.A.1.9) family. As to expression, expressed at low levels in roots.

Its subcellular location is the membrane. High-affinity transporter for external inorganic phosphate. The polypeptide is Probable inorganic phosphate transporter 1-4 (PHT1-4) (Oryza sativa subsp. japonica (Rice)).